The following is a 230-amino-acid chain: 5'-methylthioadenosine/S-adenosylhomocysteine nucleosidase (230 aa).

Glutamate 12 serves as the catalytic Proton acceptor. Residues glycine 78, isoleucine 153, and 174 to 175 (ME) each bind substrate. Aspartate 198 acts as the Proton donor in catalysis.

It belongs to the PNP/UDP phosphorylase family. MtnN subfamily.

It carries out the reaction S-adenosyl-L-homocysteine + H2O = S-(5-deoxy-D-ribos-5-yl)-L-homocysteine + adenine. The enzyme catalyses S-methyl-5'-thioadenosine + H2O = 5-(methylsulfanyl)-D-ribose + adenine. The catalysed reaction is 5'-deoxyadenosine + H2O = 5-deoxy-D-ribose + adenine. Its pathway is amino-acid biosynthesis; L-methionine biosynthesis via salvage pathway; S-methyl-5-thio-alpha-D-ribose 1-phosphate from S-methyl-5'-thioadenosine (hydrolase route): step 1/2. Functionally, catalyzes the irreversible cleavage of the glycosidic bond in both 5'-methylthioadenosine (MTA) and S-adenosylhomocysteine (SAH/AdoHcy) to adenine and the corresponding thioribose, 5'-methylthioribose and S-ribosylhomocysteine, respectively. Also cleaves 5'-deoxyadenosine, a toxic by-product of radical S-adenosylmethionine (SAM) enzymes, into 5-deoxyribose and adenine. This is 5'-methylthioadenosine/S-adenosylhomocysteine nucleosidase from Shewanella pealeana (strain ATCC 700345 / ANG-SQ1).